The primary structure comprises 259 residues: tRNA (guanine-N(1)-)-methyltransferase (259 aa).

Residues glycine 117 and leucine 137–leucine 142 each bind S-adenosyl-L-methionine.

It belongs to the RNA methyltransferase TrmD family. In terms of assembly, homodimer.

The protein resides in the cytoplasm. It carries out the reaction guanosine(37) in tRNA + S-adenosyl-L-methionine = N(1)-methylguanosine(37) in tRNA + S-adenosyl-L-homocysteine + H(+). Its function is as follows. Specifically methylates guanosine-37 in various tRNAs. This chain is tRNA (guanine-N(1)-)-methyltransferase, found in Polaromonas sp. (strain JS666 / ATCC BAA-500).